A 344-amino-acid polypeptide reads, in one-letter code: tRNA N6-adenosine threonylcarbamoyltransferase (344 aa).

Fe cation-binding residues include histidine 118 and histidine 122. Substrate is bound by residues 141–145 (TASGG), aspartate 174, glycine 187, and asparagine 284. Position 312 (aspartate 312) interacts with Fe cation.

The protein belongs to the KAE1 / TsaD family. Fe(2+) is required as a cofactor.

The protein localises to the cytoplasm. The catalysed reaction is L-threonylcarbamoyladenylate + adenosine(37) in tRNA = N(6)-L-threonylcarbamoyladenosine(37) in tRNA + AMP + H(+). Required for the formation of a threonylcarbamoyl group on adenosine at position 37 (t(6)A37) in tRNAs that read codons beginning with adenine. Is involved in the transfer of the threonylcarbamoyl moiety of threonylcarbamoyl-AMP (TC-AMP) to the N6 group of A37, together with TsaE and TsaB. TsaD likely plays a direct catalytic role in this reaction. This Desulfotalea psychrophila (strain LSv54 / DSM 12343) protein is tRNA N6-adenosine threonylcarbamoyltransferase.